The following is a 331-amino-acid chain: ESX-3 secretion system protein EccE3 (331 aa).

The next 2 helical transmembrane spans lie at 11–31 and 37–57; these read GRVTLVLLAVVPVALAYPWQS and LLGVAAAVVIGLFGFWRGLYF.

This sequence belongs to the EccE family. Part of the ESX-3 / type VII secretion system (T7SS), which is composed of cytosolic and membrane components. The ESX-3 membrane complex is composed of EccB3, EccC3, EccD3 and EccE3.

The protein localises to the cell inner membrane. Its function is as follows. Part of the ESX-3 specialized secretion system, which is important for iron and zinc uptake or homeostasis. The protein is ESX-3 secretion system protein EccE3 of Mycobacterium tuberculosis (strain ATCC 25618 / H37Rv).